The chain runs to 140 residues: Large ribosomal subunit protein bL17 (140 aa).

Belongs to the bacterial ribosomal protein bL17 family. Part of the 50S ribosomal subunit. Contacts protein L32.

The polypeptide is Large ribosomal subunit protein bL17 (Beijerinckia indica subsp. indica (strain ATCC 9039 / DSM 1715 / NCIMB 8712)).